A 328-amino-acid polypeptide reads, in one-letter code: Malate dehydrogenase (328 aa).

12–18 (GAAGQIG) serves as a coordination point for NAD(+). Residues arginine 95 and arginine 101 each coordinate substrate. NAD(+)-binding positions include asparagine 108, glutamine 115, and 132 to 134 (VGN). Substrate is bound by residues asparagine 134 and arginine 165. Residue histidine 190 is the Proton acceptor of the active site.

It belongs to the LDH/MDH superfamily. MDH type 2 family.

It catalyses the reaction (S)-malate + NAD(+) = oxaloacetate + NADH + H(+). Functionally, catalyzes the reversible oxidation of malate to oxaloacetate. The polypeptide is Malate dehydrogenase (Variovorax paradoxus (strain S110)).